The primary structure comprises 234 residues: Ubiquinone biosynthesis O-methyltransferase (234 aa).

Positions 40, 59, 80, and 123 each coordinate S-adenosyl-L-methionine.

The protein belongs to the methyltransferase superfamily. UbiG/COQ3 family.

It catalyses the reaction a 3-demethylubiquinol + S-adenosyl-L-methionine = a ubiquinol + S-adenosyl-L-homocysteine + H(+). The enzyme catalyses a 3-(all-trans-polyprenyl)benzene-1,2-diol + S-adenosyl-L-methionine = a 2-methoxy-6-(all-trans-polyprenyl)phenol + S-adenosyl-L-homocysteine + H(+). It functions in the pathway cofactor biosynthesis; ubiquinone biosynthesis. O-methyltransferase that catalyzes the 2 O-methylation steps in the ubiquinone biosynthetic pathway. In Coxiella burnetii (strain CbuG_Q212) (Coxiella burnetii (strain Q212)), this protein is Ubiquinone biosynthesis O-methyltransferase.